A 123-amino-acid chain; its full sequence is Large ribosomal subunit protein bL21 (123 aa).

This sequence belongs to the bacterial ribosomal protein bL21 family. Part of the 50S ribosomal subunit. Contacts protein L20.

This protein binds to 23S rRNA in the presence of protein L20. The chain is Large ribosomal subunit protein bL21 from Rhizobium meliloti (strain 1021) (Ensifer meliloti).